Reading from the N-terminus, the 1139-residue chain is Solute carrier family 12 member 5 (1139 aa).

2 disordered regions span residues 1-63 (MSRR…GKEY) and 92-116 (TNLPQGSREHEEAENNEGGKKKPVQ). Residues 1–98 (MSRRFTVTSL…ANYTNLPQGS (98 aa)) are Cytoplasmic-facing. Over residues 19–45 (PDPESRRHSVADPRHLPGEDVKGDGNP) the composition is skewed to basic and acidic residues. Residues 46–55 (KESSPFINST) show a composition bias toward polar residues. A Phosphothreonine modification is found at Thr-57. A compositionally biased stretch (basic and acidic residues) spans 98 to 111 (SREHEEAENNEGGK). Residues 99–120 (REHEEAENNEGGKKKPVQAPRM) traverse the membrane as a discontinuously helical segment. Lys-113 is a K(+) binding site. Residues 121–129 (GTFMGVYLP) are Extracellular-facing. The chain crosses the membrane as a helical span at residues 130-151 (CLQNIFGVILFLRLTWVVGIAG). Over 152 to 174 (IMESFCMVFICCSCTMLTAISMS) the chain is Cytoplasmic. Residues 175–203 (AIATNGVVPAGGSYYMISRSLGPEFGGAV) traverse the membrane as a helical segment. Chloride is bound at residue Ala-184. Over 204-229 (GLCFYLGTTFAGAMYILGTIEILLAY) the chain is Extracellular. The next 2 membrane-spanning stretches (helical) occupy residues 230-250 (LFPAMAIFKAEDASGEAAAML) and 251-276 (NNMRVYGTCVLTCMATVVFVGVKYVN). Residues 277-402 (KFALVFLGCV…ERSGMTSVGL (126 aa)) lie on the Extracellular side of the membrane. Residues Cys-310 and Cys-325 are joined by a disulfide bond. N-linked (GlcNAc...) asparagine glycosylation is found at Asn-314, Asn-333, Asn-351, and Asn-362. A disulfide bridge connects residues Cys-345 and Cys-354. A helical transmembrane segment spans residues 403–420 (ADGTPIDMDHPYVFSDMT). Met-410 provides a ligand contact to K(+). Chloride-binding residues include Tyr-414 and Val-415. The Cytoplasmic portion of the chain corresponds to 421-429 (SYFTLLVGI). A helical membrane pass occupies residues 430–453 (YFPSVTGIMAGSNRSGDLRDAQKS). Residue Asp-446 participates in K(+) binding. Residues 454–485 (IPTGTILAIATTSAVYISSVVLFGACIEGVVL) lie on the Extracellular side of the membrane. A helical membrane pass occupies residues 486 to 513 (RDKFGEAVNGNLVVGTLAWPSPWVIVIG). The Cytoplasmic portion of the chain corresponds to 514–534 (SFFSTCGAGLQSLTGAPRLLQ). The next 2 helical transmembrane spans lie at 535 to 555 (AISRDGIVPFLQVFGHGKANG) and 556 to 578 (EPTWALLLTACICEIGILIASLD). Glu-569 provides a ligand contact to chloride. Residues 579–592 (EVAPILSMFFLMCY) are Cytoplasmic-facing. Helical transmembrane passes span 593–615 (MFVNLACAVQTLLRTPNWRPRFR) and 616–632 (YYHWTLSFLGMSLCLAL). Residues 633 to 1139 (MFICSWYYAL…GGREVITIYS (507 aa)) lie on the Cytoplasmic side of the membrane. The interval 667–681 (GIRGLSLSAARYALL) is scissor helix. Thr-929 bears the Phosphothreonine; by OXSR1 and STK39 mark. The interval 942 to 1052 (MHLTKNERER…GPSPVSSEGI (111 aa)) is disordered. Basic and acidic residues predominate over residues 945–962 (TKNEREREIQSITDESRG). The span at 982-994 (TAGDSEEKPEEEV) shows a compositional bias: acidic residues. Residues 1003–1012 (PSCPSSSPSP) are compositionally biased toward low complexity. Positions 1023-1042 (DPEKVHLTWTKDKSVAEKNK) are enriched in basic and acidic residues. Thr-1030 is modified (phosphothreonine; by OXSR1 and STK39). Phosphoserine is present on residues Ser-1045, Ser-1048, and Ser-1049.

Belongs to the SLC12A transporter family. K/Cl co-transporter subfamily. In terms of assembly, homodimer; adopts a domain-swap conformation at the scissor helices connecting the transmembrane domain and C-terminal domain. Heterodimer with K-Cl cotransporters SLC12A6 and SLC12A7. Interacts with AP2A1. In terms of processing, phosphorylated at Thr-929 and Thr-1030 by OXSR1/OSR1 and STK39/SPAK downstream of WNK kinases (WNK1, WNK2, WNK3 or WNK4), inhibiting the potassium-chloride cotransport activity. Brain specific. Detected in neuronal cells.

The protein resides in the cell membrane. It localises to the cell projection. The protein localises to the dendrite. It catalyses the reaction K(+)(in) + chloride(in) = K(+)(out) + chloride(out). Its activity is regulated as follows. Inhibited following phosphorylation by OXSR1/OSR1 and STK39/SPAK: phosphorylation takes place downstream of WNK kinases (WNK1, WNK2, WNK3 or WNK4) in response to hyperosmotic stress and subsequent cell shrinkage. Its function is as follows. Mediates electroneutral potassium-chloride cotransport in mature neurons and is required for neuronal Cl(-) homeostasis. As major extruder of intracellular chloride, it establishes the low neuronal Cl(-) levels required for chloride influx after binding of GABA-A and glycine to their receptors, with subsequent hyperpolarization and neuronal inhibition. Involved in the regulation of dendritic spine formation and maturation. In Homo sapiens (Human), this protein is Solute carrier family 12 member 5.